We begin with the raw amino-acid sequence, 96 residues long: Nucleoid-associated protein CCA_00330 (96 aa).

Belongs to the YbaB/EbfC family. In terms of assembly, homodimer.

The protein resides in the cytoplasm. It localises to the nucleoid. Functionally, binds to DNA and alters its conformation. May be involved in regulation of gene expression, nucleoid organization and DNA protection. This chain is Nucleoid-associated protein CCA_00330, found in Chlamydia caviae (strain ATCC VR-813 / DSM 19441 / 03DC25 / GPIC) (Chlamydophila caviae).